We begin with the raw amino-acid sequence, 265 residues long: Undecaprenyl-diphosphatase (265 aa).

The next 8 membrane-spanning stretches (helical) occupy residues 1-21 (MDFL…FLPI), 39-59 (QGVG…ILYF), 87-107 (WAVV…LDYI), 110-130 (ALRA…LLAA), 144-164 (IGFK…IPGT), 187-207 (FSFF…LLTI), 217-237 (LGFL…IHFF), and 244-264 (FGMW…YLLF).

This sequence belongs to the UppP family.

It is found in the cell inner membrane. The catalysed reaction is di-trans,octa-cis-undecaprenyl diphosphate + H2O = di-trans,octa-cis-undecaprenyl phosphate + phosphate + H(+). Catalyzes the dephosphorylation of undecaprenyl diphosphate (UPP). Confers resistance to bacitracin. The polypeptide is Undecaprenyl-diphosphatase (Idiomarina loihiensis (strain ATCC BAA-735 / DSM 15497 / L2-TR)).